We begin with the raw amino-acid sequence, 88 residues long: Large ribosomal subunit protein eL31 (88 aa).

This sequence belongs to the eukaryotic ribosomal protein eL31 family.

In Archaeoglobus fulgidus (strain ATCC 49558 / DSM 4304 / JCM 9628 / NBRC 100126 / VC-16), this protein is Large ribosomal subunit protein eL31 (rpl31e).